The following is a 620-amino-acid chain: Dihydroxy-acid dehydratase (620 aa).

Position 82 (aspartate 82) interacts with Mg(2+). Residue cysteine 123 participates in [2Fe-2S] cluster binding. The Mg(2+) site is built by aspartate 124 and lysine 125. Residue lysine 125 is modified to N6-carboxylysine. Residue cysteine 197 coordinates [2Fe-2S] cluster. Glutamate 493 is a Mg(2+) binding site. The active-site Proton acceptor is the serine 519.

Belongs to the IlvD/Edd family. Homodimer. [2Fe-2S] cluster serves as cofactor. It depends on Mg(2+) as a cofactor.

It catalyses the reaction (2R)-2,3-dihydroxy-3-methylbutanoate = 3-methyl-2-oxobutanoate + H2O. The catalysed reaction is (2R,3R)-2,3-dihydroxy-3-methylpentanoate = (S)-3-methyl-2-oxopentanoate + H2O. It functions in the pathway amino-acid biosynthesis; L-isoleucine biosynthesis; L-isoleucine from 2-oxobutanoate: step 3/4. Its pathway is amino-acid biosynthesis; L-valine biosynthesis; L-valine from pyruvate: step 3/4. In terms of biological role, functions in the biosynthesis of branched-chain amino acids. Catalyzes the dehydration of (2R,3R)-2,3-dihydroxy-3-methylpentanoate (2,3-dihydroxy-3-methylvalerate) into 2-oxo-3-methylpentanoate (2-oxo-3-methylvalerate) and of (2R)-2,3-dihydroxy-3-methylbutanoate (2,3-dihydroxyisovalerate) into 2-oxo-3-methylbutanoate (2-oxoisovalerate), the penultimate precursor to L-isoleucine and L-valine, respectively. This chain is Dihydroxy-acid dehydratase, found in Bifidobacterium longum subsp. infantis (strain ATCC 15697 / DSM 20088 / JCM 1222 / NCTC 11817 / S12).